The primary structure comprises 978 residues: Copper-transporting ATPase HMA4 (978 aa).

Positions 1–11 are enriched in basic and acidic residues; the sequence is MEQNGENHLKD. The interval 1–35 is disordered; that stretch reads MEQNGENHLKDPLLQADGGGSGASPAGASPRKERK. HMA domains lie at 37–103, 111–177, and 186–252; these read RKVM…FEVD, AVCR…FGAD, and NKVH…QPPK. 4 residues coordinate Cu(+): C48, C51, C122, and C125. A run of 8 helical transmembrane segments spans residues 280-300, 315-335, 352-372, 385-405, 545-565, 584-604, 907-927, and 935-955; these read FLWS…LPMI, MTIG…IIGW, MDVL…YIVL, FFET…LEVV, FFVP…FVAG, LALQ…LGLA, VWAL…LFPF, and WLAG…SLLL.

This sequence belongs to the cation transport ATPase (P-type) (TC 3.A.3) family. Type IB subfamily. As to expression, highly expressed in roots. Expressed in vascular tissues of the stele, mainly in pericycle cells.

The protein resides in the vacuole membrane. The catalysed reaction is Cu(+)(in) + ATP + H2O = Cu(+)(out) + ADP + phosphate + H(+). Its function is as follows. Copper (Cu) transporter that mediates Cu transport in root vacuoles. Involved in Cu detoxification by sequestrating Cu into root vacuoles and limiting translocation of Cu from the roots to the shoots, and accumulation in grains. The polypeptide is Copper-transporting ATPase HMA4 (Oryza sativa subsp. japonica (Rice)).